A 225-amino-acid chain; its full sequence is Urease accessory protein UreF (225 aa).

This sequence belongs to the UreF family. In terms of assembly, ureD, UreF and UreG form a complex that acts as a GTP-hydrolysis-dependent molecular chaperone, activating the urease apoprotein by helping to assemble the nickel containing metallocenter of UreC. The UreE protein probably delivers the nickel.

It localises to the cytoplasm. In terms of biological role, required for maturation of urease via the functional incorporation of the urease nickel metallocenter. This chain is Urease accessory protein UreF, found in Arthrobacter sp. (strain FB24).